A 362-amino-acid polypeptide reads, in one-letter code: 2-aminoethylphosphonate--pyruvate transaminase (362 aa).

Lys193 is modified (N6-(pyridoxal phosphate)lysine).

The protein belongs to the class-V pyridoxal-phosphate-dependent aminotransferase family. PhnW subfamily. In terms of assembly, homodimer. Pyridoxal 5'-phosphate serves as cofactor.

It carries out the reaction (2-aminoethyl)phosphonate + pyruvate = phosphonoacetaldehyde + L-alanine. Involved in phosphonate degradation. The chain is 2-aminoethylphosphonate--pyruvate transaminase from Phocaeicola vulgatus (strain ATCC 8482 / DSM 1447 / JCM 5826 / CCUG 4940 / NBRC 14291 / NCTC 11154) (Bacteroides vulgatus).